A 778-amino-acid chain; its full sequence is Gelsolin (778 aa).

Positions 1–23 are cleaved as a signal peptide; sequence MGKQGFGYIFLTIFCTMALKLNC. Residues 49 to 172 form an actin-severing region; that stretch reads MVEHAEFSKA…YKAGGVASGF (124 aa). One copy of the Gelsolin-like 1 repeat lies at 72–154; sequence FDLVPVPKNL…VQGHESSTFL (83 aa). Ca(2+)-binding residues include G88, D89, E120, D132, G137, and A139. Residues 119–122 are actin-actin interfilament contact point; that stretch reads DERG. An a 1,2-diacyl-sn-glycero-3-phospho-(1D-myo-inositol-4,5-bisphosphate)-binding site is contributed by 158-165; sequence KSGIKYKA. Position 168 (V168) interacts with Ca(2+). 184–192 is an a 1,2-diacyl-sn-glycero-3-phospho-(1D-myo-inositol-4,5-bisphosphate) binding site; sequence RLLQVKGRR. Residues 193–266 form a Gelsolin-like 2 repeat; it reads TVRATEVPVS…SEEGAEREEM (74 aa). Ca(2+) contacts are provided by G209 and D210. An intrachain disulfide couples C211 to C224. Positions 232, 282, 325, 326, 350, 467, 468, 498, 510, 515, 517, 547, 587, 588, 610, 692, 693, and 715 each coordinate Ca(2+). Gelsolin-like repeat units lie at residues 313 to 385 and 451 to 532; these read DENP…TPLF and SEKV…PHLM. An actin-binding, Ca-sensitive region spans residues 430 to 778; the sequence is AAQHGMEDDG…LQRAMADVDV (349 aa). Gelsolin-like repeat units follow at residues 574–638 and 677–752; these read AVEL…DNFW and IEEV…PPTF.

It belongs to the villin/gelsolin family. As to quaternary structure, binds to actin and to fibronectin. Highly expressed in homogene cells of the basilar papilla. Also detected in subcutaneous layer of the skin.

It is found in the secreted. The protein resides in the cytoplasm. Its subcellular location is the cytoskeleton. Calcium-regulated, actin-modulating protein that binds to the plus (or barbed) ends of actin monomers or filaments, preventing monomer exchange (end-blocking or capping). It can promote the assembly of monomers into filaments (nucleation) as well as sever filaments already formed. Plays a role in ciliogenesis. The polypeptide is Gelsolin (GSN) (Gallus gallus (Chicken)).